The primary structure comprises 284 residues: Formamidopyrimidine-DNA glycosylase (284 aa).

The active-site Schiff-base intermediate with DNA is P2. E3 (proton donor) is an active-site residue. K61 serves as the catalytic Proton donor; for beta-elimination activity. Residues H95, R114, and R159 each coordinate DNA. An FPG-type zinc finger spans residues 244–278; sequence WVYGRKGQPCRVCNTPIERIRLAGRSTHFCPTCQR. Residue R268 is the Proton donor; for delta-elimination activity of the active site.

It belongs to the FPG family. As to quaternary structure, monomer. Zn(2+) serves as cofactor.

It catalyses the reaction Hydrolysis of DNA containing ring-opened 7-methylguanine residues, releasing 2,6-diamino-4-hydroxy-5-(N-methyl)formamidopyrimidine.. It carries out the reaction 2'-deoxyribonucleotide-(2'-deoxyribose 5'-phosphate)-2'-deoxyribonucleotide-DNA = a 3'-end 2'-deoxyribonucleotide-(2,3-dehydro-2,3-deoxyribose 5'-phosphate)-DNA + a 5'-end 5'-phospho-2'-deoxyribonucleoside-DNA + H(+). In terms of biological role, involved in base excision repair of DNA damaged by oxidation or by mutagenic agents. Acts as a DNA glycosylase that recognizes and removes damaged bases. Has a preference for oxidized purines, such as 7,8-dihydro-8-oxoguanine (8-oxoG). Has AP (apurinic/apyrimidinic) lyase activity and introduces nicks in the DNA strand. Cleaves the DNA backbone by beta-delta elimination to generate a single-strand break at the site of the removed base with both 3'- and 5'-phosphates. The sequence is that of Formamidopyrimidine-DNA glycosylase from Gloeobacter violaceus (strain ATCC 29082 / PCC 7421).